We begin with the raw amino-acid sequence, 186 residues long: Peptide deformylase (186 aa).

Fe cation is bound by residues Cys113 and His156. Glu157 is an active-site residue. His160 lines the Fe cation pocket.

The protein belongs to the polypeptide deformylase family. Fe(2+) is required as a cofactor.

It carries out the reaction N-terminal N-formyl-L-methionyl-[peptide] + H2O = N-terminal L-methionyl-[peptide] + formate. Its function is as follows. Removes the formyl group from the N-terminal Met of newly synthesized proteins. Requires at least a dipeptide for an efficient rate of reaction. N-terminal L-methionine is a prerequisite for activity but the enzyme has broad specificity at other positions. This Ligilactobacillus salivarius (strain UCC118) (Lactobacillus salivarius) protein is Peptide deformylase.